We begin with the raw amino-acid sequence, 962 residues long: Integrator complex subunit 7 (962 aa).

2 positions are modified to phosphoserine: S338 and S809.

The protein belongs to the Integrator subunit 7 family. In terms of assembly, component of the Integrator complex, composed of core subunits INTS1, INTS2, INTS3, INTS4, INTS5, INTS6, INTS7, INTS8, INTS9/RC74, INTS10, INTS11/CPSF3L, INTS12, INTS13, INTS14 and INTS15. The core complex associates with protein phosphatase 2A subunits PPP2CA and PPP2R1A, to form the Integrator-PP2A (INTAC) complex. Interacts with NABP2.

The protein localises to the nucleus. The protein resides in the chromosome. It localises to the cytoplasm. Component of the integrator complex, a multiprotein complex that terminates RNA polymerase II (Pol II) transcription in the promoter-proximal region of genes. The integrator complex provides a quality checkpoint during transcription elongation by driving premature transcription termination of transcripts that are unfavorably configured for transcriptional elongation: the complex terminates transcription by (1) catalyzing dephosphorylation of the C-terminal domain (CTD) of Pol II subunit POLR2A/RPB1 and SUPT5H/SPT5, (2) degrading the exiting nascent RNA transcript via endonuclease activity and (3) promoting the release of Pol II from bound DNA. The integrator complex is also involved in terminating the synthesis of non-coding Pol II transcripts, such as enhancer RNAs (eRNAs), small nuclear RNAs (snRNAs), telomerase RNAs and long non-coding RNAs (lncRNAs). May be not involved in the recruitment of cytoplasmic dynein to the nuclear envelope by different components of the INT complex. Plays a role in DNA damage response (DDR) signaling during the S phase. The polypeptide is Integrator complex subunit 7 (Homo sapiens (Human)).